A 54-amino-acid chain; its full sequence is Putative ankyrin repeat protein RC0701 (54 aa).

Residues 17–46 form an ANK repeat; it reads SGKTPLDWYSDYNATKIVETLIKNGGNVSS.

In Rickettsia conorii (strain ATCC VR-613 / Malish 7), this protein is Putative ankyrin repeat protein RC0701.